Here is a 107-residue protein sequence, read N- to C-terminus: U1-lycotoxin-Ls1c (107 aa).

Residues 1 to 20 (MMKVLVVVALLVTLISYSSS) form the signal peptide. Positions 21–41 (EGIDDLEADELLSLMANEQTR) are excised as a propeptide. Cystine bridges form between Cys-44/Cys-59, Cys-51/Cys-68, Cys-58/Cys-86, and Cys-70/Cys-84.

The protein belongs to the neurotoxin 19 (CSTX) family. 04 (U1-Lctx) subfamily. As to expression, expressed by the venom gland.

The protein resides in the secreted. The protein is U1-lycotoxin-Ls1c of Lycosa singoriensis (Wolf spider).